The following is an 873-amino-acid chain: MKYLSPLSLSDTQLNITELKQQLTLFSQYQINAFHQHKAVSDLVLERSHYFDQLLSRLWQFFKFDDIANTSLIAVGGYGRSELHPLSDIDILILTENNTNDAFCQKVGELVTLLWDLKLEVGHSVRSIAECIEIGQNDLTVATNLQEARYISGNKELSHQLKLKIHSDSFWPSELFYQAKIDEQKKRHSRYHDTTYNLEPDIKSSPGGLRDIHTLSWIARRHFGATSLLEMSQAGFLTDAEYRELLECQEFLWRVRFALHIELKRYDNRLTFGHQASVAEHLGFIGEGNRGVERMMKEFYRTLRRVAELNSMLLKIFDQAILHQGEQDDAIIIDDDFQRRGRLIEARKPALFQARPDTILDMFLLMANDSTIDGVAPPTMRQLRTARRRLNRFLCEIPEAKEKFLQLTQHPNALNNAFSSMHKLGVLSAYLPQWSHIVGQMQFDLFHAYTVDEHSIRLLKHINKFSDTTNRDKHPICCEIFPKIMKKELLIIAAIFHDIAKGRGGDHSELGAVDAYDFCISHGLSKPEANLVSWLVKSHLLMSVTAQRRDIYDPDVITEFAKQVRDEERLDYLVCLTVADICATNPDLWNSWKRSLIADLYNATQRALRRGLENPPDLRDRIRHNQQMASAQLRSEGFTQWEVDALWRRFKADYFLRHTHKQIAWHASHLLRHQDKEKSLILISKNASRGGTEIFVYSKDQPHLFATVAAELDRRSITIYDAQVMSSKDGYALDTFMVLDQNDDPIDEERQQRLIDQLYDVKLNDQATHIKTRRPPRQLQHFNVKTRMEFLPTKTGKRTLMEFVALDTPGLLATVGATFAQLGINLHAAKITTIGERAEDLFILTSDVGGRLDDEKQAELELALVKNVARLSS.

Residues 1-332 (MKYLSPLSLS…HQGEQDDAII (332 aa)) form a uridylyltransferase region. The segment at 333–692 (IDDDFQRRGR…ISKNASRGGT (360 aa)) is uridylyl-removing. The 123-residue stretch at 451-573 (VDEHSIRLLK…VRDEERLDYL (123 aa)) folds into the HD domain. 2 ACT domains span residues 693–777 (EIFV…RPPR) and 800–873 (LMEF…RLSS).

It belongs to the GlnD family. Mg(2+) serves as cofactor.

The catalysed reaction is [protein-PII]-L-tyrosine + UTP = [protein-PII]-uridylyl-L-tyrosine + diphosphate. It carries out the reaction [protein-PII]-uridylyl-L-tyrosine + H2O = [protein-PII]-L-tyrosine + UMP + H(+). With respect to regulation, uridylyltransferase (UTase) activity is inhibited by glutamine, while glutamine activates uridylyl-removing (UR) activity. Its function is as follows. Modifies, by uridylylation and deuridylylation, the PII regulatory proteins (GlnB and homologs), in response to the nitrogen status of the cell that GlnD senses through the glutamine level. Under low glutamine levels, catalyzes the conversion of the PII proteins and UTP to PII-UMP and PPi, while under higher glutamine levels, GlnD hydrolyzes PII-UMP to PII and UMP (deuridylylation). Thus, controls uridylylation state and activity of the PII proteins, and plays an important role in the regulation of nitrogen assimilation and metabolism. The sequence is that of Bifunctional uridylyltransferase/uridylyl-removing enzyme from Aliivibrio fischeri (strain ATCC 700601 / ES114) (Vibrio fischeri).